An 838-amino-acid polypeptide reads, in one-letter code: Kinesin-like protein KIFC2 (838 aa).

Residues 23–32 (AAAAEPGDPA) show a composition bias toward low complexity. Disordered regions lie at residues 23 to 48 (AAAA…DLPA) and 140 to 185 (LLQG…GQQP). A compositionally biased stretch (polar residues) spans 156 to 167 (DGSTSQEESPSH). Positions 186–351 (LQLEEDQRAW…SLRQGCGDLR (166 aa)) form a coiled coil. The region spanning 409–740 (NIRVLCRLRP…ARRSPRGRRI (332 aa)) is the Kinesin motor domain. 484–491 (GQTGTGKT) serves as a coordination point for ATP. A disordered region spans residues 718–792 (RSPPTRARPP…SPGPPAPLRR (75 aa)).

The protein belongs to the TRAFAC class myosin-kinesin ATPase superfamily. Kinesin family.

Its subcellular location is the cytoplasm. The protein resides in the cytoskeleton. May play a role in microtubule-dependent retrograde axonal transport. May function as the motor for the transport of multivesicular body (MVB)-like organelles in dendrites. This chain is Kinesin-like protein KIFC2 (KIFC2), found in Homo sapiens (Human).